Reading from the N-terminus, the 108-residue chain is UPF0060 membrane protein DSY4157 (108 aa).

4 consecutive transmembrane segments (helical) span residues 6–26 (ILFI…WLWL), 31–51 (PYWY…IPTL), 60–80 (VYAA…WGVD), and 86–106 (TYDW…LWAP).

It belongs to the UPF0060 family.

It localises to the cell membrane. This chain is UPF0060 membrane protein DSY4157, found in Desulfitobacterium hafniense (strain Y51).